A 291-amino-acid chain; its full sequence is Pyridoxal 5'-phosphate synthase subunit PdxS (291 aa).

D23 serves as a coordination point for D-ribose 5-phosphate. Catalysis depends on K80, which acts as the Schiff-base intermediate with D-ribose 5-phosphate. G152 contributes to the D-ribose 5-phosphate binding site. R164 provides a ligand contact to D-glyceraldehyde 3-phosphate. D-ribose 5-phosphate-binding positions include G213 and 234-235 (GS).

Belongs to the PdxS/SNZ family. In terms of assembly, in the presence of PdxT, forms a dodecamer of heterodimers.

It catalyses the reaction aldehydo-D-ribose 5-phosphate + D-glyceraldehyde 3-phosphate + L-glutamine = pyridoxal 5'-phosphate + L-glutamate + phosphate + 3 H2O + H(+). It functions in the pathway cofactor biosynthesis; pyridoxal 5'-phosphate biosynthesis. In terms of biological role, catalyzes the formation of pyridoxal 5'-phosphate from ribose 5-phosphate (RBP), glyceraldehyde 3-phosphate (G3P) and ammonia. The ammonia is provided by the PdxT subunit. Can also use ribulose 5-phosphate and dihydroxyacetone phosphate as substrates, resulting from enzyme-catalyzed isomerization of RBP and G3P, respectively. This Methanocorpusculum labreanum (strain ATCC 43576 / DSM 4855 / Z) protein is Pyridoxal 5'-phosphate synthase subunit PdxS.